The chain runs to 363 residues: NADH-quinone oxidoreductase subunit H (363 aa).

10 helical membrane passes run 29 to 49 (VLKILMIAIPLIVSVAFYVVW), 62 to 82 (GPMYVGMGLFQAFADVFKLLF), 94 to 114 (VIFVIAPLLTLAPSFAAWAVV), 127 to 147 (VGLLYLLAMTSLGVYGIILAG), 166 to 186 (VVSYEIAMGFALVGVMIAAGS), 202 to 222 (FFDWFLIPLFPLFIVYWVSGV), 239 to 257 (IVAGHMVEYSGSVFALFFL), 264 to 286 (ILVSFLISIFFLGGWLSPIQGWV), 293 to 313 (LIDWVWNGGWPWLLLKVLFFA), and 339 to 359 (FIPLTIVWIAVTALMVFSGVI).

It belongs to the complex I subunit 1 family. As to quaternary structure, NDH-1 is composed of 14 different subunits. Subunits NuoA, H, J, K, L, M, N constitute the membrane sector of the complex.

It localises to the cell inner membrane. The enzyme catalyses a quinone + NADH + 5 H(+)(in) = a quinol + NAD(+) + 4 H(+)(out). NDH-1 shuttles electrons from NADH, via FMN and iron-sulfur (Fe-S) centers, to quinones in the respiratory chain. The immediate electron acceptor for the enzyme in this species is believed to be ubiquinone. Couples the redox reaction to proton translocation (for every two electrons transferred, four hydrogen ions are translocated across the cytoplasmic membrane), and thus conserves the redox energy in a proton gradient. This subunit may bind ubiquinone. This chain is NADH-quinone oxidoreductase subunit H, found in Xylella fastidiosa (strain M12).